The following is a 225-amino-acid chain: Cytidylate kinase (225 aa).

11–19 (GPAGAGKST) contributes to the ATP binding site.

The protein belongs to the cytidylate kinase family. Type 1 subfamily.

It is found in the cytoplasm. The catalysed reaction is CMP + ATP = CDP + ADP. It carries out the reaction dCMP + ATP = dCDP + ADP. The protein is Cytidylate kinase of Shouchella clausii (strain KSM-K16) (Alkalihalobacillus clausii).